A 76-amino-acid polypeptide reads, in one-letter code: UPF0154 protein Sca_0984 (76 aa).

A helical membrane pass occupies residues 4-24; that stretch reads WLAILLIVAALIIGLVGGFFL.

It belongs to the UPF0154 family.

Its subcellular location is the cell membrane. This is UPF0154 protein Sca_0984 from Staphylococcus carnosus (strain TM300).